Here is a 2481-residue protein sequence, read N- to C-terminus: Serine/threonine-protein kinase TOR (2481 aa).

The disordered stretch occupies residues 1-31 (MSTSSQSFVAGRPASMASPSQSHRFCGPSAT). HEAT repeat units follow at residues 205–242 (VHVP…VIEK), 292–329 (SRYR…FLRD), 373–410 (HYLP…AMGS), 434–471 (DALD…SQAK), 569–607 (RLVE…FDDY), 608–645 (LAQA…KNPA), 737–775 (QYIP…STGY), and 781–819 (KEYP…LDPH). The disordered stretch occupies residues 823–847 (RNQQSLSGSHGEVPRGTGDSGQPIP). HEAT repeat units lie at residues 866 to 904 (YYST…SMGL), 908 to 945 (PYLP…IVRQ), 952 to 992 (PELL…ALND), 996 to 1036 (TYLP…GTLD), 1037 to 1075 (EHMH…CVQV), and 1077 to 1114 (GHIS…ALGE). A disordered region spans residues 1179–1204 (DPFEEGTDRNHQVNDGRLRTAGEASQ). Positions 1184 to 1198 (GTDRNHQVNDGRLRT) are enriched in basic and acidic residues. Residues 1309–1887 (LLGALAEKCR…MYPLLVACKS (579 aa)) enclose the FAT domain. 2 consecutive short sequence motifs (nuclear localization signal) follow at residues 1505–1512 (VRRAKYDE) and 2075–2080 (KQRPRK). The 314-residue stretch at 2065–2378 (FSRQLVVITS…DEDPADIDLP (314 aa)) folds into the PI3K/PI4K catalytic domain. The segment at 2071 to 2077 (VITSKQR) is G-loop. Positions 2244–2252 (GLGDRHPSN) are catalytic loop. The segment at 2264-2289 (HIDFGDCFEASMNREKFPEKVPFRLT) is activation loop. The interval 2354–2384 (NNNPNAPADVEPDEEDEDPADIDLPQPQRST) is disordered. Over residues 2363 to 2374 (VEPDEEDEDPAD) the composition is skewed to acidic residues. A Phosphoserine modification is found at serine 2424. The 33-residue stretch at 2449–2481 (HGLSVKVQVQKLINQATSHENLCQNYVGWCPFW) folds into the FATC domain.

It belongs to the PI3/PI4-kinase family. As to quaternary structure, interacts with RAPTOR1 and itself. Interacts with FKBP12 in a rapamycin-dependent manner. Binds to LST8-1. Hyperactivated upon interaction with cauliflower mosaic virus (CaMV) Tav protein. In terms of processing, activated by phosphorylation on Ser-2424 triggered by cauliflower mosaic virus P6 and auxin. As to expression, highly expressed in root meristems, shoot apical meristem (SAM) and floral buds.

The protein localises to the cytoplasm. It is found in the nucleus. It carries out the reaction L-seryl-[protein] + ATP = O-phospho-L-seryl-[protein] + ADP + H(+). The catalysed reaction is L-threonyl-[protein] + ATP = O-phospho-L-threonyl-[protein] + ADP + H(+). Almost insensitive to rapamycin. Strongly repressed by specific active site inhibitors (asTORis) such as AZD-8055, TORIN2 and WYE-132, and, to a lesser extent, by KU63794, WYE-354 and TORIN1, leading to impaired photoautotrophic growth and abnormally early meristematic cells differentiation. Repression by TORIN1 leads to impaired responses to auxin, including gravitropism. Combined treatment with rapamycin and active-site inhibitors (e.g. Torin1 and AZD-8055) results in synergistic inhibition of activity and plant growth. Inhibition by KU63794 leads to reduced auxin content in root tips. AZD-8055 treatment reduces abscisic acid (ABA) levels. In addition, inhibition by AZD-8055 leads to a strong reduction of watermelon mosaic virus (WMV) infection. Functionally, essential cell growth regulator that controls development from early embryo to seed production. Controls plant growth in environmental stress conditions. Acts through the phosphorylation of downstream effectors that are recruited by the binding partner RAPTOR. Acts by activating transcription, protein synthesis and ribosome biogenesis, and inhibiting mRNA degradation and autophagy. Can phosphorylate TAP46, a regulatory subunit of protein phosphatase 2A that modulates cell growth and survival. Involved in modulating the transition from heterotrophic to photoautotrophic growth by regulating the expression of chloroplast- and photosynthesis-associated genes. Essential for auxin signaling transduction, probably acting in polysomes to maintain the active ATPK1/S6K1 (and thus TIF3H1/eIF3h) phosphorylation status that is critical for translation reinitiation (e.g. uORF-mRNAs loading). Promotes abscisic acid (ABA) biosynthesis. Involved in the regulation of sugar-mediated (e.g. glucose and sucrose) glycolysis- and mitochondrial bioenergetics-dependent root growth promotion. Required for sugar (e.g. glucose) promotion of hypocotyl elongation in the dark, by activating the brassinosteroid pathway and stabilizing BZR1. The regulation of BZR1 degradation is dependent on autophagy. Regulates the expression, phosphorylation and ribosome association of MRFs (e.g. MRF1, MRF3 and MRF4), especially under energy-deficient conditions. In terms of biological role, (Microbial infection) Binding to cauliflower mosaic virus (CaMV) Tav protein is critical for both translation reinitiation and viral fitness. When activated by CaMV P6, promotes CaMV translation by inhibiting cellular autophagy and suppressing both silencing and innate immunity, thus conferring sensitivity to P.syringae. Its function is as follows. (Microbial infection) Required during infection by some potyvirus such as Watermelon mosaic virus (WMV) but not for turnip mosaic virus (TuMV). The protein is Serine/threonine-protein kinase TOR of Arabidopsis thaliana (Mouse-ear cress).